Here is a 429-residue protein sequence, read N- to C-terminus: Cyclin-B2-1 (429 aa).

This sequence belongs to the cyclin family. Cyclin AB subfamily. In terms of assembly, interacts with CDC20-1 and CDC20-2. Expressed in roots, stems, leaves, flowers and siliques.

The polypeptide is Cyclin-B2-1 (CYCB2-1) (Arabidopsis thaliana (Mouse-ear cress)).